The primary structure comprises 460 residues: MSDKLWGGRFTAKAAEWVDEFGASIHFDQKMAAEDIEGSIAHAKMLGKQGIISPEESEKIVSGLKIINEELIAGKIEFDVKNEDIHMNIESLLTEKIGPVAGKLHTARSRNDQVATDFHLWVKHRLPHVLESLTELQEELLTLATTHAGTIMSGYTHLQHAQPITYGHYLLAYFEMFQRDYERFEFNQKHTDILPLGAAALAGTTFPIDREFVASELGFDSIYHNSLDAVSDRDFALEFLSNAAILMMHLSRMAEELILWSTYEFNYIELSDDFSTGSSIMPQKKNADFAELVRGKTGRSYGALMGLLTTMKSLPLAYNKDMQEDKEQVFDIMDTVLASVKVFTGMLSGLTVHKERMLATTQDDFSNATELADYLATKGVPFREAHAIVGQLVLTGIQSKTPLQKMSLSDLQAVAPQIEEDIYDKLQSETAVNRRTSLGGTAVENVKKEIVRNKKVLEAR.

Belongs to the lyase 1 family. Argininosuccinate lyase subfamily.

It is found in the cytoplasm. The enzyme catalyses 2-(N(omega)-L-arginino)succinate = fumarate + L-arginine. The protein operates within amino-acid biosynthesis; L-arginine biosynthesis; L-arginine from L-ornithine and carbamoyl phosphate: step 3/3. This is Argininosuccinate lyase from Leuconostoc mesenteroides subsp. mesenteroides (strain ATCC 8293 / DSM 20343 / BCRC 11652 / CCM 1803 / JCM 6124 / NCDO 523 / NBRC 100496 / NCIMB 8023 / NCTC 12954 / NRRL B-1118 / 37Y).